A 204-amino-acid polypeptide reads, in one-letter code: Inactive ribonuclease-like protein 9 (204 aa).

The N-terminal stretch at 1 to 26 (MMRTLITTHPLLLLLLLQQLLQPVQF) is a signal peptide. 3 disulfide bridges follow: Cys97-Cys152, Cys115-Cys167, and Cys122-Cys129. N-linked (GlcNAc...) asparagine glycans are attached at residues Asn130 and Asn142.

This sequence belongs to the pancreatic ribonuclease family.

Its subcellular location is the secreted. Functionally, does not exhibit any ribonuclease activity. The polypeptide is Inactive ribonuclease-like protein 9 (RNASE9) (Macaca mulatta (Rhesus macaque)).